The sequence spans 360 residues: GDSL esterase/lipase At2g31550 (360 aa).

An N-terminal signal peptide occupies residues 1–27 (MSTSKAITLTLFITTTLLASCDAAANA). Residue Asn26 is glycosylated (N-linked (GlcNAc...) asparagine). Catalysis depends on Ser42, which acts as the Nucleophile. 2 N-linked (GlcNAc...) asparagine glycosylation sites follow: Asn104 and Asn326. Active-site residues include Asp334 and His337.

Belongs to the 'GDSL' lipolytic enzyme family.

Its subcellular location is the secreted. The protein is GDSL esterase/lipase At2g31550 of Arabidopsis thaliana (Mouse-ear cress).